A 517-amino-acid chain; its full sequence is Probable anion transporter 6, chloroplastic (517 aa).

Positions 51 to 73 are disordered; sequence TERVRESKKLPPKDPIEDPKPQL. Over residues 52–70 the composition is skewed to basic and acidic residues; the sequence is ERVRESKKLPPKDPIEDPK. 10 helical membrane-spanning segments follow: residues 130-150, 170-190, 229-249, 255-275, 312-332, 352-372, 397-417, 420-440, 452-472, and 484-504; these read FGWS…GYAL, IGVF…GFMP, FVFG…PPII, ESVF…FQFL, SFFQ…GSWG, LTEA…VTSL, IAFV…GLPP, IVGI…GLYC, ILLG…VALT, and MSLF…WLAF.

This sequence belongs to the major facilitator superfamily. Sodium/anion cotransporter (TC 2.A.1.14) family. In terms of tissue distribution, expressed in leaf veins and sepals.

It is found in the plastid. It localises to the chloroplast membrane. Its function is as follows. Inorganic phosphate and probable anion transporter. This is Probable anion transporter 6, chloroplastic (ANTR6) from Arabidopsis thaliana (Mouse-ear cress).